The sequence spans 359 residues: C-X-C chemokine receptor type 4 (359 aa).

An important for chemokine binding and signaling region spans residues 1–23 (MEPISVSIYTSDNYSEEVGSGDY). At 1-40 (MEPISVSIYTSDNYSEEVGSGDYDSNKEPCFRDENVHFNR) the chain is on the extracellular side. Position 9 is a sulfotyrosine (Tyr9). N-linked (GlcNAc...) asparagine glycosylation occurs at Asn13. Tyr14 carries the post-translational modification Sulfotyrosine. A glycan (O-linked (Xyl...) (chondroitin sulfate) serine) is linked at Ser20. Sulfotyrosine is present on Tyr23. 2 disulfide bridges follow: Cys30/Cys281 and Cys111/Cys193. The helical transmembrane segment at 41–65 (IFLPTIYFIIFLTGIVGNGLVILVM) threads the bilayer. Topologically, residues 66–79 (GYQKKLRSMTDKYR) are cytoplasmic. A helical membrane pass occupies residues 80–101 (LHLSVADLLFVITLPFWAVDAM). The tract at residues 96–99 (WAVD) is chemokine binding. Over 102-112 (ADWYFGKFLCK) the chain is Extracellular. Residues 113–132 (AVHIIYTVNLYSSVLILAFI) form a helical membrane-spanning segment. A chemokine binding region spans residues 115–119 (HIIYT). The Cytoplasmic portion of the chain corresponds to 133-156 (SLDRYLAIVHATNSQRPRKLLAEK). The Important for signaling motif lies at 135 to 137 (DRY). Residues 137-149 (YLAIVHATNSQRP) are involved in dimerization; when bound to chemokine. A helical membrane pass occupies residues 157 to 176 (AVYVGVWIPALLLTIPDFIF). Over 177–202 (ADVSQGDISQGDDRYICDRLYPDSLW) the chain is Extracellular. Residues 193 to 197 (CDRLY) form a chemokine binding, important for signaling region. The interval 198–217 (PDSLWMVVFQFQHIMVGLIL) is involved in dimerization. A helical transmembrane segment spans residues 203-223 (MVVFQFQHIMVGLILPGIVIL). The Cytoplasmic portion of the chain corresponds to 224-248 (SCYCIIISKLSHSKGHQKRKALKTT). Residues 249-268 (VILILAFFACWLPYYVGISI) form a helical membrane-spanning segment. Residues 269-289 (DSFILLGVIKQGCDFESIVHK) lie on the Extracellular side of the membrane. An involved in dimerization region spans residues 273-275 (LLG). Residues 290–309 (WISITEALAFFHCCLNPILY) form a helical membrane-spanning segment. The Cytoplasmic portion of the chain corresponds to 310-359 (AFLGAKFKSSAQHALNSMSRGSSLKILSKGKRGGHSSVSTESESSSFHSS). 2 positions are modified to phosphoserine: Ser326 and Ser328. A phosphoserine; by PKC and GRK6 mark is found at Ser331 and Ser332. The segment at 335-359 (ILSKGKRGGHSSVSTESESSSFHSS) is disordered. Ser337 is subject to Phosphoserine; by GRK6. Lys338 is covalently cross-linked (Glycyl lysine isopeptide (Lys-Gly) (interchain with G-Cter in ubiquitin)). Residues 344-359 (HSSVSTESESSSFHSS) are compositionally biased toward low complexity. Ser346 is subject to Phosphoserine; by GRK6. Ser355 and Ser358 each carry phosphoserine.

Belongs to the G-protein coupled receptor 1 family. Monomer. Can form homodimers. Interacts with CD164. Interacts with ARRB2; the interaction is dependent on the C-terminal phosphorylation of CXCR4 and allows activation of MAPK1 and MAPK3. Interacts with ARR3; the interaction is dependent on the C-terminal phosphorylation of CXCR4 and modulates calcium mobilization. Interacts with RNF113A; the interaction, enhanced by CXCL12, promotes CXCR4 ubiquitination and subsequent degradation. Interacts (via the cytoplasmic C-terminal) with ITCH (via the WW domains I and II); the interaction, enhanced by CXCL12, promotes CXCR4 ubiquitination and leads to its degradation. Interacts with extracellular ubiquitin. Interacts with DBN1; this interaction is enhanced by antigenic stimulation. Following LPS binding, may form a complex with GDF5, HSP90AA1 and HSPA8. In terms of processing, phosphorylated on agonist stimulation. Rapidly phosphorylated on serine and threonine residues in the C-terminal. Phosphorylation at Ser-331 and Ser-332 leads to recruitment of ITCH, ubiquitination and protein degradation. Post-translationally, ubiquitinated after ligand binding, leading to its degradation. Ubiquitinated by ITCH at the cell membrane on agonist stimulation. The ubiquitin-dependent mechanism, endosomal sorting complex required for transport (ESCRT), then targets CXCR4 for lysosomal degradation. This process is dependent also on prior Ser-/Thr-phosphorylation in the C-terminal of CXCR4. Also binding of ARRB1 to STAM negatively regulates CXCR4 sorting to lysosomes though modulating ubiquitination of SFR5S. Sulfation is required for efficient binding of CXCL12/SDF-1alpha and promotes its dimerization. In terms of processing, O- and N-glycosylated. N-glycosylation can mask coreceptor function. The O-glycosylation chondroitin sulfate attachment does not affect interaction with CXCL12/SDF-1alpha nor its coreceptor activity. Lymphocytes, macrophages, neutrophils, microglial cells and astrocytes. Found in spleen, thymus, bone marrow, lymph nodes and, at lower levels in brain, small intestine, stomach and kidney. CXCR4-A is predominant in all tissues tested. During embryonic development, high levels are detected in the endothelium of developing blood vessels and in many regions of the developing brain including the olfactory epithelium, olfactory bulb, hippocampus, cerebellum and spinal cord.

It localises to the cell membrane. Its subcellular location is the cell junction. It is found in the early endosome. The protein resides in the late endosome. The protein localises to the lysosome. Its function is as follows. Receptor for the C-X-C chemokine CXCL12/SDF-1 that transduces a signal by increasing intracellular calcium ion levels and enhancing MAPK1/MAPK3 activation. Involved in the AKT signaling cascade. Plays a role in regulation of cell migration, e.g. during wound healing. Acts as a receptor for extracellular ubiquitin; leading to enhanced intracellular calcium ions and reduced cellular cAMP levels. Binds bacterial lipopolysaccharide (LPS) et mediates LPS-induced inflammatory response, including TNF secretion by monocytes. Involved in hematopoiesis and in cardiac ventricular septum formation. Also plays an essential role in vascularization of the gastrointestinal tract, probably by regulating vascular branching and/or remodeling processes in endothelial cells. Involved in cerebellar development. In the CNS, could mediate hippocampal-neuron survival. The polypeptide is C-X-C chemokine receptor type 4 (Cxcr4) (Mus musculus (Mouse)).